Reading from the N-terminus, the 1291-residue chain is DNA-directed RNA polymerase subunit beta' (1291 aa).

Zn(2+) is bound by residues Cys60, Cys62, Cys75, and Cys78. Asp535, Asp537, and Asp539 together coordinate Mg(2+). Residues Cys874, Cys951, Cys958, and Cys961 each coordinate Zn(2+).

It belongs to the RNA polymerase beta' chain family. As to quaternary structure, the RNAP catalytic core consists of 2 alpha, 1 beta, 1 beta' and 1 omega subunit. When a sigma factor is associated with the core the holoenzyme is formed, which can initiate transcription. Mg(2+) is required as a cofactor. Requires Zn(2+) as cofactor.

It carries out the reaction RNA(n) + a ribonucleoside 5'-triphosphate = RNA(n+1) + diphosphate. In terms of biological role, DNA-dependent RNA polymerase catalyzes the transcription of DNA into RNA using the four ribonucleoside triphosphates as substrates. In Leifsonia xyli subsp. xyli (strain CTCB07), this protein is DNA-directed RNA polymerase subunit beta'.